Consider the following 130-residue polypeptide: MSMQDPIADMLTRIRNGQAANKVSVKMPSAKLKVAIAKLLKEEGYIADYAVADEAKPELEITLKYFQGQPVVETIQRVSRPGLRIYKGKNELPKVMGGLGVAIVSTSKGLMTDRAARLAGMGGEVICYVA.

Belongs to the universal ribosomal protein uS8 family. Part of the 30S ribosomal subunit. Contacts proteins S5 and S12.

Its function is as follows. One of the primary rRNA binding proteins, it binds directly to 16S rRNA central domain where it helps coordinate assembly of the platform of the 30S subunit. The sequence is that of Small ribosomal subunit protein uS8 from Shewanella sp. (strain MR-7).